Consider the following 121-residue polypeptide: Protein ripply2.1 (121 aa).

Positions 1–69 (MEPNQQRSCG…DKGKPPSFQH (69 aa)) are disordered. The short motif at 29–32 (WRPW) is the WRPW motif element. Polar residues predominate over residues 39-57 (HVQNPPTAQQQFYSDNQSH). Residues 69 to 104 (HPVKLFWPKSRCYDFMYQEAEELLRHFPVQATISLY) form a ripply homology domain region.

Belongs to the ripply family. In terms of tissue distribution, expressed in the presomitic mesoderm (PSM) in the anterior halves of somitomeres S-0, S-I and S-II and in the newly formed somites.

Its subcellular location is the nucleus. Required during somitogenesis to regulate somite differentiation and the positioning of the presomitic mesoderm-front. Represses the expression of genes involved in somite segmentation by acting with the corepressor tle4 to down-regulate the transcriptional activity of tbx6. Also regulates retinoic acid signaling during somitogenesis and is necessary for the expression of aldh1a2/raldh2. The sequence is that of Protein ripply2.1 (ripply2.1) from Xenopus laevis (African clawed frog).